Reading from the N-terminus, the 852-residue chain is Carbohydrate-responsive element-binding protein (852 aa).

Low complexity predominate over residues 1–12 (MAGALAGLAAGL). Disordered regions lie at residues 1-36 (MAGA…SLRR) and 54-80 (VSSP…FGPR). Phosphoserine occurs at positions 20, 23, and 25. T27 is subject to Phosphothreonine. S29 carries the phosphoserine modification. Phosphoserine is present on S196. Disordered regions lie at residues 328-365 (DSLF…CPGP), 486-527 (PCFS…NNPC), and 548-648 (STLL…NKTE). The segment covering 505-521 (ASPPTLAPATASPPTTA) has biased composition (low complexity). The segment covering 548–559 (STLLRSPGSPQE) has biased composition (polar residues). S556 is modified (phosphoserine; by AMPK). Positions 568 to 584 (FLPPTPAPTPPRPPPGP) are enriched in pro residues. 3 positions are modified to phosphoserine: S602, S614, and S631. Residues 649 to 703 (NRRITHISAEQKRRFNIKLGFDTLHGLVSTLSAQPSLKVSKATTLQKTAEYILML) enclose the bHLH domain. Residues 703–724 (LQQERAGLQEEAQQLRDEIEEL) form a leucine-zipper region.

In terms of assembly, binds DNA as a heterodimer with MLX/TCFL4. Post-translationally, phosphorylation at Ser-556 by AMPK inactivates the DNA-binding activity. As to expression, expressed in liver, heart, kidney, cerebellum and intestinal tissues.

It is found in the nucleus. Binds DNA as a heterodimer with MLX/TCFL4 and activates transcription. Binds to the canonical E box sequence 5'-CACGTG-3'. Plays a role in transcriptional activation of glycolytic target genes. Involved in glucose-responsive gene regulation. Regulates transcription in response to changes in cellular carbohydrate abundance such as occurs during fasting to feeding metabolic transition. Refeeding stimulates MLXIPL/ChREBP transcription factor, leading to increased BCKDK to PPM1K expression ratio, phosphorylation and activation of ACLY that ultimately results in the generation of malonyl-CoA and oxaloacetate immediate substrates of de novo lipogenesis and gluconeogenesis, respectively. This is Carbohydrate-responsive element-binding protein (MLXIPL) from Homo sapiens (Human).